The following is a 267-amino-acid chain: Cell division protein FtsQ (267 aa).

Residues 1-32 (MRKKTSSNKKKQTKKTNNISLRRKLRLIYKKA) lie on the Cytoplasmic side of the membrane. The chain crosses the membrane as a helical span at residues 33–53 (ILGLKIALIIFVCLFVFTKYF). Residues 54 to 267 (AGIKTYLTTN…DKNKYYIEKY (214 aa)) lie on the Periplasmic side of the membrane. The POTRA domain occupies 73-141 (FKLENVIIEG…NTVYIKLFER (69 aa)).

This sequence belongs to the FtsQ/DivIB family. FtsQ subfamily.

The protein localises to the cell inner membrane. Functionally, essential cell division protein. The sequence is that of Cell division protein FtsQ from Rickettsia felis (strain ATCC VR-1525 / URRWXCal2) (Rickettsia azadi).